The following is a 362-amino-acid chain: Phospho-N-acetylmuramoyl-pentapeptide-transferase (362 aa).

10 helical membrane-spanning segments follow: residues 28–48, 73–93, 100–120, 134–154, 169–189, 201–221, 241–261, 264–284, 290–310, and 339–359; these read GATVTALLISFLFGPRIIALL, TPTMGGFLILVGLVPSVLLWA, VWIVLFVTLGFGAVGFADDYL, VKLFFEFVIALIAMWALVLVS, TLLIELGGFFFLFGALVIVGS, GLAIVPVMIAAASLGLIVYLV, LAVFCGALIGAGLGFLWYNAP, MVFMGDTGSLALGGALGAIAV, LVLAIIGGLFVLEAVSVIVQV, and TVVVRFWIISVVLAMAGLATL.

Belongs to the glycosyltransferase 4 family. MraY subfamily. Mg(2+) is required as a cofactor.

The protein resides in the cell inner membrane. It carries out the reaction UDP-N-acetyl-alpha-D-muramoyl-L-alanyl-gamma-D-glutamyl-meso-2,6-diaminopimeloyl-D-alanyl-D-alanine + di-trans,octa-cis-undecaprenyl phosphate = di-trans,octa-cis-undecaprenyl diphospho-N-acetyl-alpha-D-muramoyl-L-alanyl-D-glutamyl-meso-2,6-diaminopimeloyl-D-alanyl-D-alanine + UMP. The protein operates within cell wall biogenesis; peptidoglycan biosynthesis. Catalyzes the initial step of the lipid cycle reactions in the biosynthesis of the cell wall peptidoglycan: transfers peptidoglycan precursor phospho-MurNAc-pentapeptide from UDP-MurNAc-pentapeptide onto the lipid carrier undecaprenyl phosphate, yielding undecaprenyl-pyrophosphoryl-MurNAc-pentapeptide, known as lipid I. This is Phospho-N-acetylmuramoyl-pentapeptide-transferase from Parvibaculum lavamentivorans (strain DS-1 / DSM 13023 / NCIMB 13966).